The following is a 213-amino-acid chain: Octanoyltransferase (213 aa).

The 176-residue stretch at 32 to 207 folds into the BPL/LPL catalytic domain; it reads ESTLDEIWLV…NILALLNNPD (176 aa). Substrate contacts are provided by residues 71–78, 138–140, and 151–153; these read RGGQVTYH, SLG, and GLA. The active-site Acyl-thioester intermediate is Cys169.

Belongs to the LipB family.

The protein resides in the cytoplasm. It catalyses the reaction octanoyl-[ACP] + L-lysyl-[protein] = N(6)-octanoyl-L-lysyl-[protein] + holo-[ACP] + H(+). The protein operates within protein modification; protein lipoylation via endogenous pathway; protein N(6)-(lipoyl)lysine from octanoyl-[acyl-carrier-protein]: step 1/2. Catalyzes the transfer of endogenously produced octanoic acid from octanoyl-acyl-carrier-protein onto the lipoyl domains of lipoate-dependent enzymes. Lipoyl-ACP can also act as a substrate although octanoyl-ACP is likely to be the physiological substrate. In Escherichia coli O17:K52:H18 (strain UMN026 / ExPEC), this protein is Octanoyltransferase.